We begin with the raw amino-acid sequence, 171 residues long: MSHYSMIDTYFSLDEDETETYLYLCRDLLKNKGEFQCTRDAFKFLSDYACLSAANQMELLFRVGRLDLIRRIFGQTWTPDSCPRYYMPICSPFRCLMALVNDFLSDKEVEEMYFLCAPRLESHLEPGSKKSFLRLASLLEDLELLGGDKLTFLRHLLTTIGRADLVKNLQV.

2 consecutive DED domains span residues 1–74 (MSHY…RIFG) and 92–171 (PFRC…NLQV).

In terms of assembly, associates with the death-inducing signaling complex (DISC) formed by TNFRSF6, FADD and caspase-8. Interacts with FADD.

Its function is as follows. Inhibits TNFRSF1A, TNFRSF6, TNFRSF10 and TNFRSF12 induced apoptosis. May interfere with caspase-8 recruitment and activation at the death-inducing signaling complex (DISC). May lead to higher virus production and contribute to virus persistence and oncogenicity. In Equus caballus (Horse), this protein is Viral CASP8 and FADD-like apoptosis regulator.